The following is a 148-amino-acid chain: HTH-type transcriptional regulator BilQ (148 aa).

The region spanning 1-140 (MDFKNLQYES…LVKNLHVVKD (140 aa)) is the HTH marR-type domain. Residues 54-77 (LNDVSTEFEVDKAHTTRTISRLEQ) constitute a DNA-binding region (H-T-H motif).

Its function is as follows. Transcription regulator that regulates expression of the bilirubin reductase operon (bilQ, bilR and bilS). This is HTH-type transcriptional regulator BilQ from Clostridioides difficile (strain CD3).